Reading from the N-terminus, the 162-residue chain is Transcription antitermination protein RfaH (162 aa).

It belongs to the RfaH family. In terms of assembly, interacts with both the nontemplate DNA and the RNA polymerase (RNAP). Monomer in solution.

Enhances distal genes transcription elongation in a specialized subset of operons that encode extracytoplasmic components. RfaH is recruited into a multi-component RNA polymerase complex by the ops element, which is a short conserved DNA sequence located downstream of the main promoter of these operons. Once bound, RfaH suppresses pausing and inhibits Rho-dependent and intrinsic termination at a subset of sites. Termination signals are bypassed, which allows complete synthesis of long RNA chains. Enhances expression of several operons involved in synthesis of lipopolysaccharides, exopolysaccharides, hemolysin, and sex factor. Also negatively controls expression and surface presentation of AG43 and possibly another AG43-independent factor that mediates cell-cell interactions and biofilm formation. The protein is Transcription antitermination protein RfaH of Escherichia coli (strain K12).